A 272-amino-acid polypeptide reads, in one-letter code: MTEVRRRGRPGQQEPSAQKGAQALERGIAILQYLEKSGGSSSVSDISLNLDLPLSTTFRLLKVLEGADFVYQDSQLGWWHIGLGAFNIGSAYIHNRDVLSVGGPFMRRLMLMSGETVNVAIRNGNEAVLIGQQECKSMVRMCAPLGSRLPLHASGAGKALLYPLPAEELVDVIVKTGLQRFTPTTIVDLPVLQRNLDEARACGYSIDQEEHVTGLNCIASAVYDDVGSVVAAISISGPASRLTPDRFVSQGELVRETARNISTALGLKPQAD.

The disordered stretch occupies residues 1-20 (MTEVRRRGRPGQQEPSAQKG). The HTH iclR-type domain maps to 21 to 83 (AQALERGIAI…SQLGWWHIGL (63 aa)). The H-T-H motif DNA-binding region spans 43 to 62 (VSDISLNLDLPLSTTFRLLK). The 170-residue stretch at 98 to 267 (VLSVGGPFMR…ARNISTALGL (170 aa)) folds into the IclR-ED domain. Residues 154 to 156 (SGA), Asp207, Cys217, and 234 to 236 (SIS) each bind glyoxylate.

In terms of biological role, negative regulator of allantoin and glyoxylate utilization operons. Binds to the gcl promoter and to the allS-allA intergenic region. The sequence is that of HTH-type transcriptional repressor AllR (allR) from Klebsiella pneumoniae.